Reading from the N-terminus, the 226-residue chain is ATP synthase F(0) complex subunit a (226 aa).

A run of 6 helical transmembrane segments spans residues 12–32, 68–88, 97–117, 138–158, 164–184, and 200–222; these read PTMM…ILFP, WALM…LGLL, QLSM…ITGF, IPML…ALAV, ITAG…LMNI, and TILE…SLYL.

This sequence belongs to the ATPase A chain family. As to quaternary structure, component of the ATP synthase complex composed at least of ATP5F1A/subunit alpha, ATP5F1B/subunit beta, ATP5MC1/subunit c (homooctomer), MT-ATP6/subunit a, MT-ATP8/subunit 8, ATP5ME/subunit e, ATP5MF/subunit f, ATP5MG/subunit g, ATP5MK/subunit k, ATP5MJ/subunit j, ATP5F1C/subunit gamma, ATP5F1D/subunit delta, ATP5F1E/subunit epsilon, ATP5PF/subunit F6, ATP5PB/subunit b, ATP5PD/subunit d, ATP5PO/subunit OSCP. ATP synthase complex consists of a soluble F(1) head domain (subunits alpha(3) and beta(3)) - the catalytic core - and a membrane F(0) domain - the membrane proton channel (subunits c, a, 8, e, f, g, k and j). These two domains are linked by a central stalk (subunits gamma, delta, and epsilon) rotating inside the F1 region and a stationary peripheral stalk (subunits F6, b, d, and OSCP). Interacts with DNAJC30; interaction is direct.

The protein resides in the mitochondrion inner membrane. The enzyme catalyses H(+)(in) = H(+)(out). Functionally, subunit a, of the mitochondrial membrane ATP synthase complex (F(1)F(0) ATP synthase or Complex V) that produces ATP from ADP in the presence of a proton gradient across the membrane which is generated by electron transport complexes of the respiratory chain. ATP synthase complex consist of a soluble F(1) head domain - the catalytic core - and a membrane F(1) domain - the membrane proton channel. These two domains are linked by a central stalk rotating inside the F(1) region and a stationary peripheral stalk. During catalysis, ATP synthesis in the catalytic domain of F(1) is coupled via a rotary mechanism of the central stalk subunits to proton translocation. With the subunit c (ATP5MC1), forms the proton-conducting channel in the F(0) domain, that contains two crucial half-channels (inlet and outlet) that facilitate proton movement from the mitochondrial intermembrane space (IMS) into the matrix. Protons are taken up via the inlet half-channel and released through the outlet half-channel, following a Grotthuss mechanism. The chain is ATP synthase F(0) complex subunit a from Felis catus (Cat).